The primary structure comprises 416 residues: Protein LAZY 1 (416 aa).

A helical membrane pass occupies residues 63–83 (FTFGGSGLLTIGTLGIAAVAI). The IGT motif signature appears at 69–75 (GLLTIGT). Disordered regions lie at residues 266–306 (AAAA…GMPA) and 337–361 (KKSR…DGPL). Positions 270 to 282 (GVGGDRAGKGGGY) are enriched in gly residues. The short motif at 278–295 (KGGGYKTMKKRKVKDEKG) is the Nuclear localization signal element.

Belongs to the LAZY family. In terms of tissue distribution, expressed specifically in the cells at the inner side of the vascular bundles of young leaf sheaths and peripheral cylinders of vascular bundles in the unelongated stems. Expressed in the leaf sheath pulvinus and the lamina joint.

It localises to the cell membrane. Its subcellular location is the nucleus. In terms of biological role, involved in the regulation of shoot gravitropism and tiller angle through negative regulation of basipetal polar auxin transport (PAT). Acts as positive regulator of lateral auxin transport. Promotes vertical shoot growth. LAZY1 and TAC1 play opposite functions in the regulation of tiller growth angle. In Oryza sativa subsp. japonica (Rice), this protein is Protein LAZY 1.